The sequence spans 459 residues: Periodic tryptophan protein 1 homolog (459 aa).

The tract at residues 44–84 is disordered; the sequence is GDTQQELDEESDDDAEEGENAEEDQNDMDVDDHADANSENR. Acidic residues predominate over residues 48–73; the sequence is QELDEESDDDAEEGENAEEDQNDMDV. The segment covering 74-84 has biased composition (basic and acidic residues); sequence DDHADANSENR. WD repeat units lie at residues 168-214, 232-272, 275-315, 321-361, and 365-405; these read LLPS…AIEP, GHKD…PHTT, AFGK…GVNS, KVDG…QLLW, and AHNE…AKHV. S385 bears the Phosphoserine mark.

This sequence belongs to the WD repeat PWP1 family. In terms of assembly, interacts with Mybbp1A. Post-translationally, phosphorylated in response to nutrient-activated TORC1 signaling. Detected in the germline of adult testis and ovary (at protein level). Detected in ovary somatic cells, in zfh1-positive cyst cells in the testis and absent in differentiated cyst cells (at protein level).

It localises to the nucleus. Its subcellular location is the nucleolus. It is found in the chromosome. The protein resides in the nucleoplasm. Chromatin-associated factor that regulates transcription. Regulates Pol I-mediated rRNA biogenesis and, probably, Pol III-mediated transcription. Regulates the localization to the nucleolus of Cdk7, a regulator of the Pol I-elongation factor TFIIH. Acts as a regulator of cell proliferation and tissue growth as part of the TORC1 and Myc signaling pathway in response to nutrients. Required in males for both germline stem cell (GSC) maintenance and early stages of germ cell differentiation of germ cell cysts. Not required for female germline stem cell (GSC) maintenance, but necessary to regulate germ cell differentiation and egg chamber development. In female somatic cells, required for follicle stem cell survival and maintenance. The chain is Periodic tryptophan protein 1 homolog from Drosophila melanogaster (Fruit fly).